The primary structure comprises 440 residues: MALIKLLLASLAITSVCGMYSKKDDVVELTEANFQSKVINSDDIWIVEFYAPWCGHCKSLVPEYKKAASALKGVAKVGAVDMTQHQSVGGPYNVQGFPTLKIFGADKKKPTDYNGQRTAQAIADSVLAEAKKAVSARLGGKSSGSSSSGSGSGSGKRGGGGSGNEVVELTDANFEDLVLNSKDIWLVEFFAPWCGHCKSLEPQWKAAASELKGKVRLGALDATVHTVVANKFAIRGFPTIKYFAPGSDVSDAQDYDGGRQSSDIVAWASARAQENMPAPEVFEGINQQVVEDACKEKQLCIFAFLPHILDCQSECRNNYLAMLKEQSEKFKKNLWGWIWVEGAAQPALEESFEVGGFGYPAMTALNFRKNKYAVLKGSFGKDGIHEFLRDLSYGKGRTSSLRGDGFPKIQKTEKWDGKDGALPAEDDIDLSDIDLDKTEL.

A signal peptide spans 1 to 18 (MALIKLLLASLAITSVCG). Thioredoxin domains follow at residues 19–131 (MYSK…AEAK) and 127–273 (LAEA…ARAQ). Residues Cys-54 and Cys-57 each act as nucleophile in the active site. Cys-54 and Cys-57 are disulfide-bonded. The disordered stretch occupies residues 138–164 (LGGKSSGSSSSGSGSGSGKRGGGGSGN). The segment covering 139-149 (GGKSSGSSSSG) has biased composition (low complexity). Positions 150–163 (SGSGSGKRGGGGSG) are enriched in gly residues. Catalysis depends on nucleophile residues Cys-194 and Cys-197. A disulfide bridge links Cys-194 with Cys-197. Positions 404–426 (DGFPKIQKTEKWDGKDGALPAED) are disordered. The segment covering 410 to 419 (QKTEKWDGKD) has biased composition (basic and acidic residues). Positions 437–440 (KTEL) match the Prevents secretion from ER motif.

Belongs to the protein disulfide isomerase family.

The protein localises to the endoplasmic reticulum lumen. The enzyme catalyses Catalyzes the rearrangement of -S-S- bonds in proteins.. Its function is as follows. May function as a chaperone that inhibits aggregation of misfolded proteins. May negatively regulate the unfolded protein response (UPR) through binding to UPR sensors. The chain is Protein disulfide-isomerase A6 homolog from Caenorhabditis elegans.